A 389-amino-acid polypeptide reads, in one-letter code: Alanine racemase (389 aa).

Catalysis depends on lysine 48, which acts as the Proton acceptor; specific for D-alanine. Lysine 48 carries the N6-(pyridoxal phosphate)lysine modification. Arginine 144 is a substrate binding site. Tyrosine 281 acts as the Proton acceptor; specific for L-alanine in catalysis. Methionine 329 is a binding site for substrate.

This sequence belongs to the alanine racemase family. It depends on pyridoxal 5'-phosphate as a cofactor.

It carries out the reaction L-alanine = D-alanine. It participates in amino-acid biosynthesis; D-alanine biosynthesis; D-alanine from L-alanine: step 1/1. Catalyzes the interconversion of L-alanine and D-alanine. May also act on other amino acids. The sequence is that of Alanine racemase (alr) from Leptospira interrogans serogroup Icterohaemorrhagiae serovar Lai (strain 56601).